Here is a 565-residue protein sequence, read N- to C-terminus: NAD-dependent malic enzyme (565 aa).

Tyr-104 functions as the Proton donor in the catalytic mechanism. NAD(+) is bound at residue Arg-157. Lys-175 acts as the Proton acceptor in catalysis. Residues Glu-246, Asp-247, and Asp-270 each coordinate a divalent metal cation. Residues Asp-270 and Asn-418 each coordinate NAD(+).

Belongs to the malic enzymes family. As to quaternary structure, homotetramer. The cofactor is Mg(2+). It depends on Mn(2+) as a cofactor.

The enzyme catalyses (S)-malate + NAD(+) = pyruvate + CO2 + NADH. It catalyses the reaction oxaloacetate + H(+) = pyruvate + CO2. This is NAD-dependent malic enzyme from Shigella boydii serotype 18 (strain CDC 3083-94 / BS512).